The sequence spans 293 residues: Acetylglutamate kinase (293 aa).

Substrate contacts are provided by residues 68 to 69 (GG), Arg90, and Asn189.

The protein belongs to the acetylglutamate kinase family. ArgB subfamily.

It is found in the cytoplasm. It carries out the reaction N-acetyl-L-glutamate + ATP = N-acetyl-L-glutamyl 5-phosphate + ADP. It participates in amino-acid biosynthesis; L-arginine biosynthesis; N(2)-acetyl-L-ornithine from L-glutamate: step 2/4. Its function is as follows. Catalyzes the ATP-dependent phosphorylation of N-acetyl-L-glutamate. This is Acetylglutamate kinase from Mycobacterium marinum (strain ATCC BAA-535 / M).